The chain runs to 501 residues: MDAKKGSGEPEFFSEYGDASRYEVTEVVGKGSYGVVAAAVDTHTGGRVAIKKINDVFEHISDATRILREIKLLRLLRHPDIVEIKHIMLPPSRREFRDIYIIFELMESDLHQVIKANDDLTPEHHQFFLYQLLRGMKYIHAASVFHRDLKPKNILANADCKVKICDFGLARVSFDDTPSAIFWTDYVATRWYRAPELCGSFFSKYTPAIDIWSVGCIFAEMLMGKPLFPGKNVVHQLDLMTDLLGSPSGETISRIRNEKARRYLGNMRKKPRVPFSQKFPGADPMALHLLERLLAFDPKDRPTAAEALTDPYFTGLANSEREPIAQPISKLEFEFERRKLAKDDVRELIYREILEYHPQMMQKYLRGGDQSNFLYPSGVDRFKRQFAHLEEGVAQGDKTSPQLRQHVSLPRERVVRNGDEPDPTADYCIKLHVGEQPGHSSVTDGLNKPLLSARNFLKSESIGASQCVVIKEKREKDEESMSEYMNEAADGVPHKIAQLKT.

One can recognise a Protein kinase domain in the interval 22–313 (YEVTEVVGKG…AAEALTDPYF (292 aa)). ATP is bound by residues 28-36 (VGKGSYGVV) and lysine 51. Residue aspartate 148 is the Proton acceptor of the active site. At threonine 184 the chain carries Phosphothreonine. A TXY motif is present at residues 184 to 186 (TDY). Phosphotyrosine is present on tyrosine 186. The tract at residues 477–501 (DEESMSEYMNEAADGVPHKIAQLKT) is disordered.

It belongs to the protein kinase superfamily. CMGC Ser/Thr protein kinase family. MAP kinase subfamily. In terms of processing, dually phosphorylated on Thr-184 and Tyr-186, which activates the enzyme.

The catalysed reaction is L-seryl-[protein] + ATP = O-phospho-L-seryl-[protein] + ADP + H(+). It catalyses the reaction L-threonyl-[protein] + ATP = O-phospho-L-threonyl-[protein] + ADP + H(+). Activated by threonine and tyrosine phosphorylation. The chain is Mitogen-activated protein kinase 16 (MPK16) from Oryza sativa subsp. japonica (Rice).